The following is a 471-amino-acid chain: Alpha-1,3/1,6-mannosyltransferase alg-2 (471 aa).

Asn-178 and Asn-279 each carry an N-linked (GlcNAc...) asparagine glycan. A helical membrane pass occupies residues 446–466; the sequence is GMILLVVGAAVAAVAGVISAV.

This sequence belongs to the glycosyltransferase group 1 family. Glycosyltransferase 4 subfamily.

The protein resides in the endoplasmic reticulum membrane. The catalysed reaction is a beta-D-Man-(1-&gt;4)-beta-D-GlcNAc-(1-&gt;4)-alpha-D-GlcNAc-diphospho-di-trans,poly-cis-dolichol + GDP-alpha-D-mannose = an alpha-D-Man-(1-&gt;3)-beta-D-Man-(1-&gt;4)-beta-D-GlcNAc-(1-&gt;4)-alpha-D-GlcNAc-diphospho-di-trans,poly-cis-dolichol + GDP + H(+). The enzyme catalyses an alpha-D-Man-(1-&gt;3)-beta-D-Man-(1-&gt;4)-beta-D-GlcNAc-(1-&gt;4)-alpha-D-GlcNAc-diphospho-di-trans,poly-cis-dolichol + GDP-alpha-D-mannose = an alpha-D-Man-(1-&gt;3)-[alpha-D-Man-(1-&gt;6)]-beta-D-Man-(1-&gt;4)-beta-D-GlcNAc-(1-&gt;4)-alpha-D-GlcNAc-diphospho-di-trans,poly-cis-dolichol + GDP + H(+). The protein operates within protein modification; protein glycosylation. Mannosylates Man(2)GlcNAc(2)-dolichol diphosphate and Man(1)GlcNAc(2)-dolichol diphosphate to form Man(3)GlcNAc(2)-dolichol diphosphate. This Neurospora crassa (strain ATCC 24698 / 74-OR23-1A / CBS 708.71 / DSM 1257 / FGSC 987) protein is Alpha-1,3/1,6-mannosyltransferase alg-2 (alg-2).